A 336-amino-acid chain; its full sequence is Putative bifunctional cytochrome c-type biogenesis protein CcmAE (336 aa).

The segment at methionine 1–threonine 199 is cytochrome c biogenesis ATP-binding export protein CcmA 2. The region spanning leucine 2 to methionine 242 is the ABC transporter domain. Glycine 34 to threonine 41 serves as a coordination point for ATP. The segment at leucine 196–serine 336 is cytochrome c-type biogenesis protein CcmE 2. 2 residues coordinate heme: histidine 307 and tyrosine 311. The disordered stretch occupies residues histidine 307–serine 336.

This sequence in the N-terminal section; belongs to the ABC transporter superfamily. CcmA exporter (TC 3.A.1.107) family. In the C-terminal section; belongs to the CcmE/CycJ family.

It is found in the cell inner membrane. The catalysed reaction is heme b(in) + ATP + H2O = heme b(out) + ADP + phosphate + H(+). Functionally, part of the ABC transporter complex CcmAB involved in the biogenesis of c-type cytochromes; once thought to export heme, this seems not to be the case, but its exact role is uncertain. Responsible for energy coupling to the transport system. Its function is as follows. Heme chaperone required for the biogenesis of c-type cytochromes. Transiently binds heme delivered by CcmC and transfers the heme to apo-cytochromes in a process facilitated by CcmF and CcmH. In Salmonella choleraesuis (strain SC-B67), this protein is Putative bifunctional cytochrome c-type biogenesis protein CcmAE (ccmAE).